A 358-amino-acid polypeptide reads, in one-letter code: tRNA-specific 2-thiouridylase MnmA (358 aa).

ATP-binding positions include 8-15 (GLSGGVDS) and Met34. An interaction with target base in tRNA region spans residues 94–96 (NPD). Cys99 serves as the catalytic Nucleophile. Cys99 and Cys196 are disulfide-bonded. Residue Gly123 participates in ATP binding. The tract at residues 146 to 148 (KDQ) is interaction with tRNA. Residue Cys196 is the Cysteine persulfide intermediate of the active site. The segment at 308-309 (RY) is interaction with tRNA.

Belongs to the MnmA/TRMU family.

It is found in the cytoplasm. The catalysed reaction is S-sulfanyl-L-cysteinyl-[protein] + uridine(34) in tRNA + AH2 + ATP = 2-thiouridine(34) in tRNA + L-cysteinyl-[protein] + A + AMP + diphosphate + H(+). Catalyzes the 2-thiolation of uridine at the wobble position (U34) of tRNA, leading to the formation of s(2)U34. The protein is tRNA-specific 2-thiouridylase MnmA of Thiobacillus denitrificans (strain ATCC 25259 / T1).